We begin with the raw amino-acid sequence, 257 residues long: Thiazole synthase (257 aa).

Lys-97 serves as the catalytic Schiff-base intermediate with DXP. 1-deoxy-D-xylulose 5-phosphate-binding positions include Gly-158, 184–185 (AG), and 206–207 (NT).

The protein belongs to the ThiG family. In terms of assembly, homotetramer. Forms heterodimers with either ThiH or ThiS.

The protein resides in the cytoplasm. It catalyses the reaction [ThiS sulfur-carrier protein]-C-terminal-Gly-aminoethanethioate + 2-iminoacetate + 1-deoxy-D-xylulose 5-phosphate = [ThiS sulfur-carrier protein]-C-terminal Gly-Gly + 2-[(2R,5Z)-2-carboxy-4-methylthiazol-5(2H)-ylidene]ethyl phosphate + 2 H2O + H(+). Its pathway is cofactor biosynthesis; thiamine diphosphate biosynthesis. In terms of biological role, catalyzes the rearrangement of 1-deoxy-D-xylulose 5-phosphate (DXP) to produce the thiazole phosphate moiety of thiamine. Sulfur is provided by the thiocarboxylate moiety of the carrier protein ThiS. In vitro, sulfur can be provided by H(2)S. In Phocaeicola vulgatus (strain ATCC 8482 / DSM 1447 / JCM 5826 / CCUG 4940 / NBRC 14291 / NCTC 11154) (Bacteroides vulgatus), this protein is Thiazole synthase.